A 421-amino-acid polypeptide reads, in one-letter code: Enolase (421 aa).

Position 162 (glutamine 162) interacts with (2R)-2-phosphoglycerate. Catalysis depends on glutamate 204, which acts as the Proton donor. The Mg(2+) site is built by aspartate 241, glutamate 284, and aspartate 311. The (2R)-2-phosphoglycerate site is built by lysine 336, arginine 365, serine 366, and lysine 387. Residue lysine 336 is the Proton acceptor of the active site.

This sequence belongs to the enolase family. Requires Mg(2+) as cofactor.

It localises to the cytoplasm. Its subcellular location is the secreted. The protein resides in the cell surface. It carries out the reaction (2R)-2-phosphoglycerate = phosphoenolpyruvate + H2O. The protein operates within carbohydrate degradation; glycolysis; pyruvate from D-glyceraldehyde 3-phosphate: step 4/5. In terms of biological role, catalyzes the reversible conversion of 2-phosphoglycerate (2-PG) into phosphoenolpyruvate (PEP). It is essential for the degradation of carbohydrates via glycolysis. This chain is Enolase, found in Nitratiruptor sp. (strain SB155-2).